A 225-amino-acid chain; its full sequence is Heptaprenylglyceryl phosphate synthase (225 aa).

Lys-6 contributes to the sn-glycerol 1-phosphate binding site. Positions 8 and 34 each coordinate Mg(2+). Sn-glycerol 1-phosphate contacts are provided by residues Tyr-153–Gly-158, Gly-183, and Gly-203–Asn-204.

The protein belongs to the GGGP/HepGP synthase family. Group I subfamily. Homodimer. It depends on Mg(2+) as a cofactor.

It carries out the reaction sn-glycerol 1-phosphate + all-trans-heptaprenyl diphosphate = 3-heptaprenyl-sn-glycero-1-phosphate + diphosphate. Its pathway is membrane lipid metabolism; glycerophospholipid metabolism. Its function is as follows. Prenyltransferase that catalyzes in vivo the transfer of the heptaprenyl moiety of heptaprenyl pyrophosphate (HepPP; 35 carbon atoms) to the C3 hydroxyl of sn-glycerol-1-phosphate (G1P), producing heptaprenylglyceryl phosphate (HepGP). This reaction is an ether-bond-formation step in the biosynthesis of archaea-type G1P-based membrane lipids found in Bacillales. The protein is Heptaprenylglyceryl phosphate synthase of Listeria monocytogenes serotype 4a (strain HCC23).